The following is a 464-amino-acid chain: Tyrosine--tRNA ligase, mitochondrial (464 aa).

Tyr-61 lines the L-tyrosine pocket. Asp-65 provides a ligand contact to ATP. The short motif at Pro-66–Asn-75 is the 'HIGH' region element. 5 residues coordinate L-tyrosine: Asp-105, Tyr-209, Gln-213, Asp-216, and Gln-235. The 'KMSKS' region signature appears at Lys-270–Ser-274. Lys-273 contacts ATP.

The protein belongs to the class-I aminoacyl-tRNA synthetase family. Homodimer.

The protein localises to the mitochondrion matrix. It catalyses the reaction tRNA(Tyr) + L-tyrosine + ATP = L-tyrosyl-tRNA(Tyr) + AMP + diphosphate + H(+). Its function is as follows. Catalyzes the attachment of tyrosine to tRNA(Tyr) in a two-step reaction: tyrosine is first activated by ATP to form Tyr-AMP and then transferred to the acceptor end of tRNA(Tyr). This chain is Tyrosine--tRNA ligase, mitochondrial, found in Drosophila melanogaster (Fruit fly).